The following is a 215-amino-acid chain: Probable Rab-related GTPase (215 aa).

20–27 (GSSGVGKS) lines the GTP pocket. An Effector region motif is present at residues 42 to 50 (VSPTIGAAF). GTP contacts are provided by residues 69–73 (DTAGQ) and 127–130 (NKID). 2 S-geranylgeranyl cysteine; by host lipidation sites follow: cysteine 211 and cysteine 212. Cysteine 212 is modified (cysteine methyl ester; by host). The propeptide at 213 to 215 (YIS) is removed in mature form.

Belongs to the small GTPase superfamily. Rab family.

Its subcellular location is the host cell membrane. Its function is as follows. May be involved in protein transport. This is Probable Rab-related GTPase from Acanthamoeba polyphaga mimivirus (APMV).